A 432-amino-acid chain; its full sequence is 3-phosphoshikimate 1-carboxyvinyltransferase (432 aa).

Positions 23, 24, and 28 each coordinate 3-phosphoshikimate. Residue K23 participates in phosphoenolpyruvate binding. The phosphoenolpyruvate site is built by G95 and R123. 3-phosphoshikimate contacts are provided by S167, Q169, D317, and K344. Residue Q169 coordinates phosphoenolpyruvate. Catalysis depends on D317, which acts as the Proton acceptor. 2 residues coordinate phosphoenolpyruvate: R348 and R390.

The protein belongs to the EPSP synthase family. In terms of assembly, monomer.

It is found in the cytoplasm. It catalyses the reaction 3-phosphoshikimate + phosphoenolpyruvate = 5-O-(1-carboxyvinyl)-3-phosphoshikimate + phosphate. Its pathway is metabolic intermediate biosynthesis; chorismate biosynthesis; chorismate from D-erythrose 4-phosphate and phosphoenolpyruvate: step 6/7. Its function is as follows. Catalyzes the transfer of the enolpyruvyl moiety of phosphoenolpyruvate (PEP) to the 5-hydroxyl of shikimate-3-phosphate (S3P) to produce enolpyruvyl shikimate-3-phosphate and inorganic phosphate. This Staphylococcus saprophyticus subsp. saprophyticus (strain ATCC 15305 / DSM 20229 / NCIMB 8711 / NCTC 7292 / S-41) protein is 3-phosphoshikimate 1-carboxyvinyltransferase.